Reading from the N-terminus, the 126-residue chain is Sperm-specific H1/protamine-like protein type 2 (126 aa).

One can recognise an H15 domain in the interval 5 to 84; sequence KKPTTLSMIV…GATGSFRVGK (80 aa). The interval 74–126 is disordered; the sequence is SGATGSFRVGKAPASPKKAKKAKSPKKKSSKKSKNKSNNAKAKKSPKKKADSN. Over residues 90-120 the composition is skewed to basic residues; it reads KKAKKAKSPKKKSSKKSKNKSNNAKAKKSPK.

Post-translationally, OE2 and OE3 are produced by post-translational cleavage of a common precursor. As to expression, sperm.

Its subcellular location is the nucleus. The protein localises to the chromosome. Its function is as follows. Linker histones are implicated in chromatin remodeling and/or transcriptional regulation during spermiogenesis, the process of spermatid maturation into spermatozoa. Protamines substitute for histones in the chromatin of sperm during the haploid phase of spermatogenesis. They compact sperm DNA into a highly condensed, stable and inactive complex. The sequence is that of Sperm-specific H1/protamine-like protein type 2 from Ostrea edulis (Native oyster).